Consider the following 622-residue polypeptide: Pyranose 2-oxidase (622 aa).

An N-terminal signal peptide occupies residues 1 to 28 (MSTSSSDPFYNFAKTSFKSAAAQKASAT). The propeptide occupies 29-38 (SLPPLPGPDQ). At H167 the chain carries Tele-8alpha-FAD histidine. Substrate is bound by residues Q448 and H450. H548 (proton acceptor) is an active-site residue. Residue N593 is part of the active site.

The protein belongs to the GMC oxidoreductase family. In terms of assembly, homotetramer. FAD is required as a cofactor.

It is found in the periplasm. The enzyme catalyses D-glucose + O2 = 2-dehydro-D-glucose + H2O2. Its function is as follows. Catalyzes the oxidation of various aldopyranoses and disaccharides on carbon-2 to the corresponding 2-keto sugars concomitant with the reduction of O(2) to H(2)O(2). Plays an important role in lignin degradation of wood rot fungi by supplying the essential cosubstrate H(2)O(2) for the ligninolytic peroxidases, lignin peroxidase and manganese-dependent peroxidase. This Trametes pubescens (White-rot fungus) protein is Pyranose 2-oxidase (p2ox).